The primary structure comprises 1357 residues: MAYSYTEKKRIRKDFSKLPDVMDVPYLLAIQLDSYREFLQAGASKDHFRDVGLHAAFKSVFPIISYSGNAALEYVGYRLGEPAFDVKECVLRGVTFAVPLRVKVRLIIFDKESSNKAIKDIKEQEVYMGEIPLMTENGTFVINGTERVIVSQLHRSPGVFFDHDRGKTHSSGKLLYSARIIPYRGSWLDFEFDPKDCVFVRIDRRRKLPASVLLRALGYSTEEVLNTFYTTNVFHISGEKLSLELVPQRLRGEVAVMDIHDETGKVIVEQGRRITARHINQLEKAGVKQLDVPMEYVLGRTTAKAIVHPATGEILAECNTEMTTELLIKVAKAQVVRIETLYTNDIDCGPFISDTLKIDTTSNQLEALVEIYRMMRPGEPPTKDAAETLFNNLFFSAERYDLSAVGRMKFNRRIGRTEIEGSGVLSKEDIVEVLKTLVDIRNGKGIVDDIDHLGNRRVRCVGEMAENQFRVGLVRVERAVKERLSMAESEGLMPQDLINAKPVAAAVKEFFGSSQLSQFMDQNNPLSEITHKRRVSALGPGGLTRERAGFEVRDVHPTHYGRVCPIETPEGPNIGLINSLAAYARTNQYGFLESPYRVVKEGVVSDDIVFLSAIEEADHVIAQASAAMNEKKQLIDELVAVRHLNEFTVKAPEDVTLMDVSPKQVVSVAASLIPFLEHDDANRALMGSNMQRQAVPTLRADKPLVGTGMERNVARDSGVCVVARRGGVIDSVDASRIVVRVNDDEVETGEAGVDIYNLTKYTRSNQNTCINQRPLVSKGDKVQRSDIMADGPSTDMGELALGQNMRIAFMAWNGFNFEDSICLSERVVQEDRFTTIHIQELTCVARDTKLGPEEITADIPNVGEAALNKLDEAGIVYVGAEVGAGDILVGKVTPKGETQLTPEEKLLRAIFGEKASDVKDTSLRVPTGTKGTVIDVQVFTRDGVERDSRALAIEKMQLDEIRKDLNEEFRIVEGATFERLRSALNGQVVDGGAGLKKGTVITDEVLDGLEHGQWFKLRMAEDALNEQLEKAQQYIVDRRRLLDDKFEDKKRKLQQGDDLAPGVLKIVKVYLAIRRRIQPGDKMAGRHGNKGVVSVIMPVEDMPHDANGTPVDVVLNPLGVPSRMNVGQILETHLGLAAKGLGEKIDRMLEEQRKAAELRVFLTEVYNEIGGRQENLDEFTDEEILALANNLKKGVPMATPVFDGAKEREIKAMLKLADLPESGQMVLFDGRTGNKFERPVTVGYMYMLKLNHLVDDKMHARSTGSYSLVTQQPLGGKAQFGGQRFGEMEVWALEAYGAAYTLQEMLTVKSDDVNGRTKMYKNIVDGDHRMEPGMPESFNVLIKEIRSLGIDIDLETE.

This sequence belongs to the RNA polymerase beta chain family. As to quaternary structure, the RNAP catalytic core consists of 2 alpha, 1 beta, 1 beta' and 1 omega subunit. When a sigma factor is associated with the core the holoenzyme is formed, which can initiate transcription.

It catalyses the reaction RNA(n) + a ribonucleoside 5'-triphosphate = RNA(n+1) + diphosphate. DNA-dependent RNA polymerase catalyzes the transcription of DNA into RNA using the four ribonucleoside triphosphates as substrates. The polypeptide is DNA-directed RNA polymerase subunit beta (Pseudomonas putida (strain GB-1)).